We begin with the raw amino-acid sequence, 374 residues long: Fe(2+) transport protein 1 (374 aa).

The N-terminal stretch at 1-33 (MATPRTLVPILPPVAALLLLLVAASSIPILAAA) is a signal peptide. Residues 34–62 (QPADACGGAPDQAAADGACHDVPRALRLK) are Extracellular-facing. A helical membrane pass occupies residues 63-83 (LIAIPTILVSSVVGVCLPLLS). The Cytoplasmic portion of the chain corresponds to 84–92 (RSVPALRPD). A helical membrane pass occupies residues 93-113 (GGLFAVVKAFASGVILATGYM). Over 114 to 137 (HVLPDAFNNLTSPCLPRKPWSEFP) the chain is Extracellular. The chain crosses the membrane as a helical span at residues 138–158 (FAAFVAMLAAVSTLMADSLML). The Cytoplasmic segment spans residues 159 to 219 (TYYNRSKPRP…ATQVQLRRNR (61 aa)). The interval 166–199 (PRPSSGGDVAAVADHGESPDQGHRHGHGHGHGHG) is disordered. The span at 179-188 (DHGESPDQGH) shows a compositional bias: basic and acidic residues. A helical membrane pass occupies residues 220 to 240 (VVVQVLEIGIVVHSVVIGLGM). Topologically, residues 241–251 (GASQNVCTIRP) are extracellular. The helical transmembrane segment at 252–272 (LVAAMCFHQMFEGMGLGGCIL) threads the bilayer. Residues 273 to 282 (QAEYGRRMRS) lie on the Cytoplasmic side of the membrane. Residues 283-303 (VLVFFFSTTTPFGIALGLALT) traverse the membrane as a helical segment. Residues 304 to 313 (RVYRDNSPTA) are Extracellular-facing. Residues 314–334 (LIVVGLLNAASAGLLHYMALV) form a helical membrane-spanning segment. Residues 335-353 (ELLAADFMGPKLQGNVRLQ) are Cytoplasmic-facing. Residues 354 to 374 (LAAFLAVLLGAGGMSVMAKWA) form a helical membrane-spanning segment.

The protein belongs to the ZIP transporter (TC 2.A.5) family. As to expression, expressed in companion cells in the upper region of the root.

Its subcellular location is the cell membrane. Its function is as follows. Iron transporter involved in the uptake of iron from the rhizosphere across the plasma membrane in the root epidermal layer. May also transport other divalent cations. The polypeptide is Fe(2+) transport protein 1 (IRT1) (Oryza sativa subsp. japonica (Rice)).